A 318-amino-acid polypeptide reads, in one-letter code: uncharacterized protein (318 aa).

Residues 1–22 show a composition bias toward basic and acidic residues; the sequence is MKASQERSEARRTAHSVKEKKY. 2 disordered regions span residues 1–29 and 293–318; these read MKASQERSEARRTAHSVKEKKYMVMASPR and DDGDDGDGDDDGDDDGDDDGGDDDDE.

This is an uncharacterized protein from Ictalurid herpesvirus 1 (strain Auburn) (IcHV-1).